A 313-amino-acid polypeptide reads, in one-letter code: 2-phosphoglycerate kinase (313 aa).

Positions 8 to 95 (SRILVKDKEY…LWRRVLKKHS (88 aa)) constitute an ATP-cone domain.

Belongs to the 2-phosphoglycerate kinase family. The cofactor is a divalent metal cation.

It carries out the reaction (2R)-2-phosphoglycerate + ATP = (2R)-2,3-bisphosphoglycerate + ADP + H(+). Its pathway is thermoadapter biosynthesis; cyclic 2,3-diphosphoglycerate biosynthesis; cyclic 2,3-diphosphoglycerate from 2-phospho-D-glycerate: step 1/2. In terms of biological role, catalyzes the phosphorylation of 2-phosphoglycerate to 2,3-diphosphoglycerate. Involved in the biosynthesis of cyclic 2,3-bisphosphoglycerate, a thermoprotectant. This is 2-phosphoglycerate kinase from Methanococcus maripaludis (strain C5 / ATCC BAA-1333).